The following is a 760-amino-acid chain: Endoplasmin homolog (760 aa).

The first 23 residues, 1-23 (MRFLLVGFVALLAVSAFIPNVYA), serve as a signal peptide directing secretion. The ATP site is built by asparagine 95, aspartate 137, asparagine 150, and phenylalanine 187. Asparagine 95 carries N-linked (GlcNAc...) asparagine glycosylation. N-linked (GlcNAc...) asparagine glycosylation is present at asparagine 423. A disordered region spans residues 727–760 (SQDAQVETEQHIEEAEPEPEAAEETTIEEEHSEL). The span at 741–760 (AEPEPEAAEETTIEEEHSEL) shows a compositional bias: acidic residues. Residues 757-760 (HSEL) carry the Prevents secretion from ER motif.

This sequence belongs to the heat shock protein 90 family.

It localises to the endoplasmic reticulum lumen. In terms of biological role, molecular chaperone that functions in the processing and transport of secreted proteins. This chain is Endoplasmin homolog, found in Caenorhabditis elegans.